The sequence spans 496 residues: Inosine-5'-monophosphate dehydrogenase (496 aa).

CBS domains lie at 96–152 (VIKD…TKKV) and 156–212 (MTKD…PQAA). NAD(+)-binding positions include Asp-247 and 299 to 301 (GIG). K(+)-binding residues include Gly-301 and Gly-303. Ser-304 contacts IMP. Cys-306 is a binding site for K(+). The active-site Thioimidate intermediate is Cys-306. Residues 339-341 (DGG), 362-363 (GS), and 386-390 (YRGMG) each bind IMP. The active-site Proton acceptor is the Arg-405. IMP is bound at residue Glu-423. Positions 477, 478, and 479 each coordinate K(+).

The protein belongs to the IMPDH/GMPR family. Homotetramer. Requires K(+) as cofactor.

It catalyses the reaction IMP + NAD(+) + H2O = XMP + NADH + H(+). It functions in the pathway purine metabolism; XMP biosynthesis via de novo pathway; XMP from IMP: step 1/1. With respect to regulation, mycophenolic acid (MPA) is a non-competitive inhibitor that prevents formation of the closed enzyme conformation by binding to the same site as the amobile flap. In contrast, mizoribine monophosphate (MZP) is a competitive inhibitor that induces the closed conformation. MPA is a potent inhibitor of mammalian IMPDHs but a poor inhibitor of the bacterial enzymes. MZP is a more potent inhibitor of bacterial IMPDH. Catalyzes the conversion of inosine 5'-phosphate (IMP) to xanthosine 5'-phosphate (XMP), the first committed and rate-limiting step in the de novo synthesis of guanine nucleotides, and therefore plays an important role in the regulation of cell growth. The sequence is that of Inosine-5'-monophosphate dehydrogenase from Methanocaldococcus jannaschii (strain ATCC 43067 / DSM 2661 / JAL-1 / JCM 10045 / NBRC 100440) (Methanococcus jannaschii).